Reading from the N-terminus, the 443-residue chain is Methyl-coenzyme M reductase I subunit beta (443 aa).

Tyr-367 contacts coenzyme M. Gly-369 lines the coenzyme B pocket.

The protein belongs to the methyl-coenzyme M reductase beta subunit family. MCR is a hexamer of two alpha, two beta, and two gamma chains, forming a dimer of heterotrimers. It depends on coenzyme F430 as a cofactor.

It is found in the cytoplasm. The enzyme catalyses coenzyme B + methyl-coenzyme M = methane + coenzyme M-coenzyme B heterodisulfide. Its pathway is one-carbon metabolism; methyl-coenzyme M reduction; methane from methyl-coenzyme M: step 1/1. Component of the methyl-coenzyme M reductase (MCR) I that catalyzes the reductive cleavage of methyl-coenzyme M (CoM-S-CH3 or 2-(methylthio)ethanesulfonate) using coenzyme B (CoB or 7-mercaptoheptanoylthreonine phosphate) as reductant which results in the production of methane and the mixed heterodisulfide of CoB and CoM (CoM-S-S-CoB). This is the final step in methanogenesis. In Methanothermobacter thermautotrophicus (strain ATCC 29096 / DSM 1053 / JCM 10044 / NBRC 100330 / Delta H) (Methanobacterium thermoautotrophicum), this protein is Methyl-coenzyme M reductase I subunit beta (mcrB).